The following is a 398-amino-acid chain: Substance-K receptor (398 aa).

The Extracellular portion of the chain corresponds to 1 to 32; that stretch reads MGTCDIVTEANISSGPESNTTGITAFSMPSWQ. Residues Asn11 and Asn19 are each glycosylated (N-linked (GlcNAc...) asparagine). The helical transmembrane segment at 33–56 threads the bilayer; sequence LALWATAYLALVLVAVTGNAIVIW. Over 57–69 the chain is Cytoplasmic; the sequence is IILAHRRMRTVTN. Residues 70-90 form a helical membrane-spanning segment; that stretch reads YFIVNLALADLCMAAFNAAFN. Residues 91 to 107 are Extracellular-facing; sequence FVYASHNIWYFGRAFCY. Residues Cys106 and Cys181 are joined by a disulfide bond. The helical transmembrane segment at 108-129 threads the bilayer; it reads FQNLFPITAMFVSIYSMTAIAA. Topologically, residues 130–149 are cytoplasmic; that stretch reads DRYMAIVHPFQPRLSAPSTK. A helical membrane pass occupies residues 150–170; the sequence is AVIAGIWLVALALASPQCFYS. Residues 171-196 are Extracellular-facing; that stretch reads TVTMDQGATKCVVAWPEDSGGKTLLL. Residues 197–218 traverse the membrane as a helical segment; the sequence is YHLVVIALIYFLPLAVMFVAYS. Residues 219 to 251 are Cytoplasmic-facing; that stretch reads VIGLTLWRRAVPGHQAHGANLRHLQAMKKFVKT. A helical membrane pass occupies residues 252–272; it reads MVLVVLTFAICWLPYHLYFIL. The Extracellular portion of the chain corresponds to 273 to 290; the sequence is GSFQEDIYCHKFIQQVYL. The chain crosses the membrane as a helical span at residues 291-310; the sequence is ALFWLAMSSTMYNPIIYCCL. The Cytoplasmic portion of the chain corresponds to 311-398; sequence NHRFRSGFRL…LAPTKTHVEI (88 aa). Cys324 is lipidated: S-palmitoyl cysteine.

Belongs to the G-protein coupled receptor 1 family.

Its subcellular location is the cell membrane. Its function is as follows. This is a receptor for the tachykinin neuropeptide substance K (neurokinin A). It is associated with G proteins that activate a phosphatidylinositol-calcium second messenger system. The rank order of affinity of this receptor to tachykinins is: substance K &gt; neuromedin-K &gt; substance P. The protein is Substance-K receptor (TACR2) of Homo sapiens (Human).